Consider the following 340-residue polypeptide: UPF0324 membrane protein BA_5405/GBAA_5405/BAS5024 (340 aa).

Transmembrane regions (helical) follow at residues 13–35 (FGFSQGIGITLLIAIVAKYLAEL), 40–59 (IMGQLVIAILIGMVWRAAIG), 99–118 (VLVIAAVVITFTLFVVYGLT), 128–150 (GILTACGTAICGAAAVVAIAPQV), 157–179 (TAVGAAIIAILGTIFTLIYTLLY), 189–211 (YGVFSGATLHEIAHVIAAAAPGG), 218–240 (AVIVKLTRVTMLVPVAILIGVWF), 255–277 (LPIPWFIFGFLAMSAVHSLGIIP), 279–301 (VVAGYIVVLAYMLIAMAMAGLGL), and 316–338 (FVAGLIGSVCLSVLGYVLVYALG).

It belongs to the UPF0324 family.

The protein localises to the cell membrane. This is UPF0324 membrane protein BA_5405/GBAA_5405/BAS5024 from Bacillus anthracis.